Consider the following 313-residue polypeptide: Ribosomal protein L11 methyltransferase (313 aa).

The S-adenosyl-L-methionine site is built by Thr154, Gly179, Asp201, and Asn242.

The protein belongs to the methyltransferase superfamily. PrmA family.

Its subcellular location is the cytoplasm. The catalysed reaction is L-lysyl-[protein] + 3 S-adenosyl-L-methionine = N(6),N(6),N(6)-trimethyl-L-lysyl-[protein] + 3 S-adenosyl-L-homocysteine + 3 H(+). Its function is as follows. Methylates ribosomal protein L11. The protein is Ribosomal protein L11 methyltransferase of Xanthomonas oryzae pv. oryzae (strain MAFF 311018).